The following is a 276-amino-acid chain: MAKFRLSLVQFLVSPVKSENLNRACKLIKEAAQKGAQIVALPECFNSPYGTKYFPEYAEKIPGESTERLSQVAKECGIYLIGGSIPEEDSGKLYNTCAVFGPDGTLLVKHRKIHLFDIDVPGKIRFQESETLSPGDSFSVFETPYCKVGVGICYDIRFAELAQLYSKKGCQLLVYPGAFNMTTGPAHWELLQRARALDNQVYVATASPARDEKASYVAWGHSTIVSPWGEVIAKAGSEETVISADIDLEYLAEIREQIPIRRQRRHDLYSVEEKKN.

Positions 4–248 constitute a CN hydrolase domain; the sequence is FRLSLVQFLV…ETVISADIDL (245 aa). The Proton acceptor role is filled by E43. K112 acts as the Proton donor in catalysis. Catalysis depends on C153, which acts as the Nucleophile.

Belongs to the carbon-nitrogen hydrolase superfamily. NIT1/NIT2 family. As to quaternary structure, homodimer.

It localises to the cytoplasm. It catalyses the reaction 2-oxoglutaramate + H2O = 2-oxoglutarate + NH4(+). The enzyme catalyses 2-oxosuccinamate + H2O = oxaloacetate + NH4(+). Its function is as follows. Has omega-amidase activity. The role of omega-amidase is to remove potentially toxic intermediates by converting 2-oxoglutaramate and 2-oxosuccinamate to biologically useful 2-oxoglutarate and oxaloacetate, respectively. The sequence is that of Omega-amidase NIT2 (nit2) from Xenopus tropicalis (Western clawed frog).